The following is a 963-amino-acid chain: Importin-13 (963 aa).

HEAT repeat units lie at residues 24 to 54, 56 to 88, 95 to 135, 142 to 179, 194 to 231, 236 to 268, 276 to 325, 330 to 372, 375 to 438, 440 to 476, 487 to 522, 524 to 558, 562 to 600, 603 to 648, 676 to 716, 720 to 754, 761 to 803, 815 to 845, 860 to 893, and 897 to 931; these read ENVE…QAQA, PQAW…KISR, TDQY…LSMM, AVAD…EFQT, LAVE…SWVQ, LQDC…NAIS, VNTL…ALLD, WQSF…DDIL, EAEK…YEML, AELL…FQSI, VVPG…WLAD, PVMI…CREC, LPPY…LLSA, VEEI…SNLF, PVVV…VKTL, FAPM…VHIF, FPPI…ALKR, VKAV…TELL, EDGR…FALN, and FSLL…QQIL. The region spanning 45–111 is the Importin N-terminal domain; it reads AQKWLMQAQA…KAQLFTQITR (67 aa).

This sequence belongs to the importin beta family. Interacts with UBC9, RAN, RBM8A, eIF-1A and PAX6.

The protein localises to the cytoplasm. Its subcellular location is the nucleus. In terms of biological role, functions in nuclear protein import as nuclear transport receptor. Serves as receptor for nuclear localization signals (NLS) in cargo substrates. Is thought to mediate docking of the importin/substrate complex to the nuclear pore complex (NPC) through binding to nucleoporin and the complex is subsequently translocated through the pore by an energy requiring, Ran-dependent mechanism. At the nucleoplasmic side of the NPC, Ran binds to the importin, the importin/substrate complex dissociates and importin is re-exported from the nucleus to the cytoplasm where GTP hydrolysis releases Ran. The directionality of nuclear import is thought to be conferred by an asymmetric distribution of the GTP- and GDP-bound forms of Ran between the cytoplasm and nucleus. Mediates the nuclear import of UBC9, the RBM8A/MAGOH complex, PAX6 and probably other members of the paired homeobox family. Also mediates nuclear export of eIF-1A, and the cytoplasmic release of eIF-1A is triggered by the loading of import substrates onto IPO13. The sequence is that of Importin-13 (IPO13) from Bos taurus (Bovine).